The sequence spans 399 residues: Tryptophan synthase beta chain (399 aa).

N6-(pyridoxal phosphate)lysine is present on Lys-92.

This sequence belongs to the TrpB family. In terms of assembly, tetramer of two alpha and two beta chains. The cofactor is pyridoxal 5'-phosphate.

The catalysed reaction is (1S,2R)-1-C-(indol-3-yl)glycerol 3-phosphate + L-serine = D-glyceraldehyde 3-phosphate + L-tryptophan + H2O. Its pathway is amino-acid biosynthesis; L-tryptophan biosynthesis; L-tryptophan from chorismate: step 5/5. In terms of biological role, the beta subunit is responsible for the synthesis of L-tryptophan from indole and L-serine. This is Tryptophan synthase beta chain from Legionella pneumophila (strain Paris).